The following is a 202-amino-acid chain: Orotate phosphoribosyltransferase (202 aa).

Residues K93 and 113–121 contribute to the 5-phospho-alpha-D-ribose 1-diphosphate site; that span reads EDIITTGGS. T117 and R145 together coordinate orotate.

It belongs to the purine/pyrimidine phosphoribosyltransferase family. PyrE subfamily. Homodimer. Mg(2+) serves as cofactor.

It catalyses the reaction orotidine 5'-phosphate + diphosphate = orotate + 5-phospho-alpha-D-ribose 1-diphosphate. Its pathway is pyrimidine metabolism; UMP biosynthesis via de novo pathway; UMP from orotate: step 1/2. Functionally, catalyzes the transfer of a ribosyl phosphate group from 5-phosphoribose 1-diphosphate to orotate, leading to the formation of orotidine monophosphate (OMP). The polypeptide is Orotate phosphoribosyltransferase (Campylobacter fetus subsp. fetus (strain 82-40)).